The primary structure comprises 377 residues: tRNA-specific 2-thiouridylase MnmA (377 aa).

ATP is bound by residues 12–19 (GMSGGVDS) and methionine 38. Residues 98–100 (NPD) are interaction with target base in tRNA. Cysteine 103 functions as the Nucleophile in the catalytic mechanism. Residues cysteine 103 and cysteine 200 are joined by a disulfide bond. Position 127 (glycine 127) interacts with ATP. The segment at 150–152 (KDQ) is interaction with tRNA. The Cysteine persulfide intermediate role is filled by cysteine 200. An interaction with tRNA region spans residues 314–315 (RY).

It belongs to the MnmA/TRMU family.

It localises to the cytoplasm. It carries out the reaction S-sulfanyl-L-cysteinyl-[protein] + uridine(34) in tRNA + AH2 + ATP = 2-thiouridine(34) in tRNA + L-cysteinyl-[protein] + A + AMP + diphosphate + H(+). Functionally, catalyzes the 2-thiolation of uridine at the wobble position (U34) of tRNA, leading to the formation of s(2)U34. The chain is tRNA-specific 2-thiouridylase MnmA from Limosilactobacillus reuteri (strain DSM 20016) (Lactobacillus reuteri).